Reading from the N-terminus, the 92-residue chain is MKLCVTVLSLLVLVAAFCSPALSAPMGSDPPTSCCFTYTVRKLPRNFVTDYYETSSLCSQPAVVFQTKKGRQVCANPSDDWVQEYMDDLELN.

The N-terminal stretch at 1–23 (MKLCVTVLSLLVLVAAFCSPALS) is a signal peptide. 2 disulfides stabilise this stretch: cysteine 34–cysteine 58 and cysteine 35–cysteine 74.

This sequence belongs to the intercrine beta (chemokine CC) family. Homodimer. Interacts with CCR5.

It is found in the secreted. In terms of biological role, monokine with inflammatory and chemokinetic properties. In Sus scrofa (Pig), this protein is C-C motif chemokine 4 (CCL4).